Reading from the N-terminus, the 325-residue chain is uncharacterized protein (325 aa).

The tract at residues 108-141 (PHRTQGISSTSSKSSKGGKKTPVRSTPKEIKKAT) is disordered.

This is an uncharacterized protein from Homo sapiens (Human).